Reading from the N-terminus, the 89-residue chain is Small ribosomal subunit protein uS15 (89 aa).

Residues 1 to 21 show a composition bias toward basic and acidic residues; sequence MSIAAERKAEVIKTNARKDGD. Positions 1–24 are disordered; that stretch reads MSIAAERKAEVIKTNARKDGDTGS.

The protein belongs to the universal ribosomal protein uS15 family. In terms of assembly, part of the 30S ribosomal subunit. Forms a bridge to the 50S subunit in the 70S ribosome, contacting the 23S rRNA.

Its function is as follows. One of the primary rRNA binding proteins, it binds directly to 16S rRNA where it helps nucleate assembly of the platform of the 30S subunit by binding and bridging several RNA helices of the 16S rRNA. Forms an intersubunit bridge (bridge B4) with the 23S rRNA of the 50S subunit in the ribosome. The polypeptide is Small ribosomal subunit protein uS15 (Rhodopseudomonas palustris (strain BisA53)).